The primary structure comprises 203 residues: Snake venom metalloproteinase atroxase (203 aa).

Pyrrolidone carboxylic acid (Glu) is present on glutamate 1. Residue asparagine 5 is glycosylated (N-linked (GlcNAc...) asparagine). Positions arginine 9–lysine 203 constitute a Peptidase M12B domain. The Ca(2+) site is built by glutamate 12 and aspartate 96. Residue histidine 145 coordinates Zn(2+). The active site involves glutamate 146. Zn(2+) is bound by residues histidine 149 and histidine 155. Cysteine 160 and cysteine 167 form a disulfide bridge. Ca(2+) is bound at residue asparagine 202.

It belongs to the venom metalloproteinase (M12B) family. P-I subfamily. Monomer. Zn(2+) is required as a cofactor. The N-terminus is blocked. As to expression, expressed by the venom gland.

It localises to the secreted. It carries out the reaction Cleavage of 5-His-|-Leu-6, 9-Ser-|-His-10, 10-His-|-Leu-11, 14-Ala-|-Leu-15 and 16-Tyr-|-Leu-17 in insulin B chain.. Inhibited by EDTA and alpha2-macroglobulin. In terms of biological role, snake venom zinc metalloprotease that has Aalpha, Bbeta fibrin(ogen)olytic activities. It cleaves the Aalpha chain of fibrinogen first followed by the Bbeta chain and shows no effect on the gamma chain. Does not induce or inhibit platelet aggregation, and is unable to activate plasminogen. Exhibits low lethality when tested on mice. Intravenous administration results in thrombolysis within one hour followed by recanalization. Fibrinogenolytic activity results in a 60% decrease in the rat's plasma fibrinogen level. Histological examination of kidney, liver, heart and lung tissue shows no necrosis nor hemorrhage. This chain is Snake venom metalloproteinase atroxase, found in Crotalus atrox (Western diamondback rattlesnake).